The sequence spans 160 residues: Small ribosomal subunit protein bS6 (160 aa).

Belongs to the bacterial ribosomal protein bS6 family.

Binds together with bS18 to 16S ribosomal RNA. The chain is Small ribosomal subunit protein bS6 from Ureaplasma parvum serovar 3 (strain ATCC 27815 / 27 / NCTC 11736).